A 400-amino-acid polypeptide reads, in one-letter code: Lysophospholipid transporter LplT (400 aa).

Helical transmembrane passes span 19 to 39 (VIVA…ATLA), 53 to 73 (VLQM…GQIA), 91 to 111 (AGAA…LVGI), 139 to 159 (LMEA…GVLA), 164 to 184 (IAAL…NLFI), 195 to 213 (SWRL…VVLW), 227 to 247 (LFWG…PVAL), 257 to 277 (YLNA…AKLV), 281 to 301 (TVSR…IFSL), 304 to 324 (ALLP…FFVV), 352 to 372 (NSAM…GVPA), and 373 to 393 (VAIG…LWIW).

This sequence belongs to the major facilitator superfamily. LplT (TC 2.A.1.42) family.

The protein resides in the cell inner membrane. In terms of biological role, catalyzes the facilitated diffusion of 2-acyl-glycero-3-phosphoethanolamine (2-acyl-GPE) into the cell. In Salmonella schwarzengrund (strain CVM19633), this protein is Lysophospholipid transporter LplT.